A 130-amino-acid chain; its full sequence is Small ribosomal subunit protein uS11c (130 aa).

It belongs to the universal ribosomal protein uS11 family. As to quaternary structure, part of the 30S ribosomal subunit.

The protein resides in the plastid. Its subcellular location is the chloroplast. The protein is Small ribosomal subunit protein uS11c of Pyropia yezoensis (Susabi-nori).